Here is a 94-residue protein sequence, read N- to C-terminus: Large ribosomal subunit protein uL23 (94 aa).

Belongs to the universal ribosomal protein uL23 family. As to quaternary structure, part of the 50S ribosomal subunit. Contacts protein L29, and trigger factor when it is bound to the ribosome.

In terms of biological role, one of the early assembly proteins it binds 23S rRNA. One of the proteins that surrounds the polypeptide exit tunnel on the outside of the ribosome. Forms the main docking site for trigger factor binding to the ribosome. The protein is Large ribosomal subunit protein uL23 of Geobacter sulfurreducens (strain ATCC 51573 / DSM 12127 / PCA).